The chain runs to 578 residues: Acyl-coenzyme A synthetase ACSM5, mitochondrial (578 aa).

Residues 1–22 (MRLWLRGLACQALRSSWGVCRI) constitute a mitochondrion transit peptide. At Lys-96 the chain carries N6-acetyllysine; alternate. At Lys-96 the chain carries N6-succinyllysine; alternate. N6-acetyllysine is present on Lys-151. An ATP-binding site is contributed by 229–237 (TSGTTGAPK). The residue at position 302 (Lys-302) is an N6-acetyllysine; alternate. Lys-302 carries the post-translational modification N6-succinyllysine; alternate. At Lys-335 the chain carries N6-acetyllysine. Residues 367–372 (EGYGQS), Asp-454, Arg-469, and Lys-565 contribute to the ATP site.

The protein belongs to the ATP-dependent AMP-binding enzyme family. The cofactor is Mg(2+). Mn(2+) is required as a cofactor.

The protein localises to the mitochondrion matrix. The catalysed reaction is a medium-chain fatty acid + ATP + CoA = a medium-chain fatty acyl-CoA + AMP + diphosphate. In terms of biological role, catalyzes the activation of fatty acids by CoA to produce an acyl-CoA, the first step in fatty acid metabolism. This is Acyl-coenzyme A synthetase ACSM5, mitochondrial (Acsm5) from Mus musculus (Mouse).